Consider the following 114-residue polypeptide: UPF0342 protein LCA_0622 (114 aa).

This sequence belongs to the UPF0342 family.

This chain is UPF0342 protein LCA_0622, found in Latilactobacillus sakei subsp. sakei (strain 23K) (Lactobacillus sakei subsp. sakei).